A 262-amino-acid polypeptide reads, in one-letter code: Type II restriction enzyme HinfI (262 aa).

The enzyme catalyses Endonucleolytic cleavage of DNA to give specific double-stranded fragments with terminal 5'-phosphates.. Its function is as follows. A P subtype restriction enzyme that recognizes the double-stranded sequence 5'-GANTC-3' and cleaves after G-1. This is Type II restriction enzyme HinfI (hinfIR) from Haemophilus influenzae.